A 142-amino-acid chain; its full sequence is Photosystem II extrinsic protein U (142 aa).

An N-terminal signal peptide occupies residues 1-29 (MKGLVRLLTVFSLLLGCWGWLGTTQIAQA).

This sequence belongs to the PsbU family. In terms of assembly, PSII is composed of 1 copy each of membrane proteins PsbA, PsbB, PsbC, PsbD, PsbE, PsbF, PsbH, PsbI, PsbJ, PsbK, PsbL, PsbM, PsbT, PsbX, PsbY, PsbZ, Psb30/Ycf12, peripheral proteins PsbO, CyanoQ (PsbQ), PsbU, PsbV and a large number of cofactors. It forms dimeric complexes.

The protein localises to the cellular thylakoid membrane. In terms of biological role, one of the extrinsic, lumenal subunits of photosystem II (PSII). PSII is a light-driven water plastoquinone oxidoreductase, using light energy to abstract electrons from H(2)O, generating a proton gradient subsequently used for ATP formation. The extrinsic proteins stabilize the structure of photosystem II oxygen-evolving complex (OEC), the ion environment of oxygen evolution and protect the OEC against heat-induced inactivation. This is Photosystem II extrinsic protein U from Nostoc sp. (strain PCC 7120 / SAG 25.82 / UTEX 2576).